A 483-amino-acid polypeptide reads, in one-letter code: UDP-N-acetylmuramate--L-alanine ligase (483 aa).

122–128 (GSHGKTT) serves as a coordination point for ATP.

The protein belongs to the MurCDEF family.

It localises to the cytoplasm. It catalyses the reaction UDP-N-acetyl-alpha-D-muramate + L-alanine + ATP = UDP-N-acetyl-alpha-D-muramoyl-L-alanine + ADP + phosphate + H(+). It functions in the pathway cell wall biogenesis; peptidoglycan biosynthesis. Cell wall formation. The chain is UDP-N-acetylmuramate--L-alanine ligase from Synechococcus sp. (strain CC9311).